The following is a 134-amino-acid chain: Profilin-1 (134 aa).

A disulfide bond links C13 and C118. The Involved in PIP2 interaction signature appears at A84–T100. Phosphothreonine is present on T114.

It belongs to the profilin family. Occurs in many kinds of cells as a complex with monomeric actin in a 1:1 ratio. Post-translationally, phosphorylated by MAP kinases.

Its subcellular location is the cytoplasm. The protein localises to the cytoskeleton. Binds to actin and affects the structure of the cytoskeleton. At high concentrations, profilin prevents the polymerization of actin, whereas it enhances it at low concentrations. The chain is Profilin-1 from Olea europaea (Common olive).